The following is a 1821-amino-acid chain: Latent-transforming growth factor beta-binding protein 2 (1821 aa).

A signal peptide spans 1-35; sequence MRPRTKARSPGRALRNPWRGFLPLTLALFVGAGHA. Disordered stretches follow at residues 38-58 and 81-165; these read DPVGRYEPAGGDANRLRRPGG and GLQP…RLTG. The interval 94-115 is heparin-binding; sequence SPRRPTEAEARRPSRAQQSRRV. Composition is skewed to low complexity over residues 108–120 and 129–145; these read RAQQSRRVQPPAQ and QQQPAPRTRAAPALPRL. N181 is a glycosylation site (N-linked (GlcNAc...) asparagine). An EGF-like 1 domain is found at 187-219; it reads IKPVCEPPCQNRGSCSRPQLCVCRSGFRGARCE. Intrachain disulfides connect C191–C201, C195–C207, and C209–C218. The disordered stretch occupies residues 229–339; that stretch reads PQNSRLAPRR…AVPLEHPSSP (111 aa). The interval 232–249 is heparin-binding; sequence SRLAPRRWAERSPNLRRS. The span at 262–274 shows a compositional bias: pro residues; sequence PPAPQSPPAPQSP. Polar residues-rich tracts occupy residues 280-292 and 304-314; these read SGLSQTHPSQQHV and ATASSQLSSNA. N343 carries an N-linked (GlcNAc...) asparagine glycan. 344–354 contacts heparin; the sequence is LTEKIKKIKIV. Residues 375–377 carry the Cell attachment site motif; it reads RGD. The EGF-like 2 domain maps to 396-428; it reads RIYFCQIPCLNGGRCIGRDECWCPANSTGKFCH. Disulfide bonds link C400/C410, C404/C416, and C418/C427. N-linked (GlcNAc...) asparagine glycosylation is present at N421. The residue at position 506 (S506) is a Phosphoserine. The disordered stretch occupies residues 510-544; the sequence is RPPPWLPASPGHSLWDSNNIPARSGEPPRPLPPAA. The TB 1 domain maps to 552-604; it reads GRCYLNTVNGQCANPLLELTTQEDCCGSVGAFWGVTLCAPCPPRPASPVIENG. Intrachain disulfides connect C554–C576, C563–C589, and C577–C592. Residue N616 is glycosylated (N-linked (GlcNAc...) asparagine). Residues 622 to 662 form the EGF-like 3; calcium-binding domain; sequence DINECLTLGLCKDAECVNTRGSYLCTCRPGLMLDPSRSRCV. Disulfide bonds link C626–C637, C632–C646, C648–C661, C674–C696, C683–C709, C697–C712, and C698–C724. The TB 2 domain occupies 672–724; the sequence is GLCYRSLGPGTCTLPLAQRITKQICCCSRVGKAWGSECEKCPLPGTEAFREIC. Residues 744 to 757 are compositionally biased toward basic and acidic residues; the sequence is AEEEELARPPREQG. The tract at residues 744–772 is disordered; it reads AEEEELARPPREQGQRSSGALPGPAERQP. N811 is a glycosylation site (N-linked (GlcNAc...) asparagine). Residues 844-886 form the EGF-like 4 domain; that stretch reads GIDRCAAGATNVCGPGTCVNLPDGYRCVCSPGYQLHPSQAYCT. 49 disulfides stabilise this stretch: C848-C861, C856-C870, C872-C885, C891-C902, C896-C911, C913-C928, C934-C945, C940-C954, C956-C968, C974-C985, C980-C994, C997-C1008, C1014-C1025, C1020-C1034, C1036-C1049, C1055-C1066, C1061-C1075, C1078-C1091, C1097-C1108, C1103-C1117, C1120-C1133, C1139-C1151, C1146-C1160, C1162-C1174, C1180-C1192, C1186-C1201, C1203-C1216, C1222-C1233, C1228-C1242, C1244-C1257, C1263-C1276, C1271-C1285, C1289-C1301, C1307-C1319, C1313-C1328, C1330-C1343, C1349-C1361, C1356-C1370, C1372-C1386, C1413-C1436, C1423-C1448, C1437-C1451, C1438-C1463, C1489-C1502, C1497-C1511, C1513-C1526, C1532-C1542, C1537-C1551, and C1553-C1566. The EGF-like 5; calcium-binding domain occupies 887–929; sequence DDNECLRDPCKGKGRCINRVGSYSCFCYPGYTLATSGATQECQ. Residues 930–969 enclose the EGF-like 6; calcium-binding domain; the sequence is DINECEQPGVCSGGQCTNTEGSYHCECDQGYIMVRKGHCQ. One can recognise an EGF-like 7; calcium-binding domain in the interval 970–1009; sequence DINECRHPGTCPDGRCVNSPGSYTCLACEEGYRGQSGSCV. One can recognise an EGF-like 8; calcium-binding domain in the interval 1010 to 1050; the sequence is DVNECLTPGVCAHGKCTNLEGSFRCSCEQGYEVTSDEKGCQ. The EGF-like 9; calcium-binding domain occupies 1051-1092; the sequence is DVDECASRASCPTGLCLNTEGSFACSACENGYWVNEDGTACE. Residues 1093 to 1134 form the EGF-like 10; calcium-binding domain; that stretch reads DLDECAFPGVCPSGVCTNTAGSFSCKDCDGGYRPSPLGDSCE. Positions 1135-1175 constitute an EGF-like 11; calcium-binding domain; sequence DVDECEDPQSSCLGGECKNTVGSYQCLCPQGFQLANGTVCE. Residue N1170 is glycosylated (N-linked (GlcNAc...) asparagine). One can recognise an EGF-like 12; calcium-binding domain in the interval 1176 to 1217; that stretch reads DVNECMGEEHCAPHGECLNSHGSFFCLCAPGFVSAEGGTSCQ. Positions 1218–1258 constitute an EGF-like 13; calcium-binding domain; it reads DVDECATTDPCVGGHCVNTEGSFNCLCETGFQPSPESGECV. The 44-residue stretch at 1259-1302 folds into the EGF-like 14; calcium-binding domain; sequence DIDECEDYGDPVCGTWKCENSPGSYRCVLGCQPGFHMAPNGDCI. In terms of domain architecture, EGF-like 15; calcium-binding spans 1303–1344; the sequence is DIDECANDTMCGSHGFCDNTDGSFRCLCDQGFEISPSGWDCV. Residue N1309 is glycosylated (N-linked (GlcNAc...) asparagine). The EGF-like 16; calcium-binding domain occupies 1345 to 1387; it reads DVNECELMLAVCGAALCENVEGSFLCLCASDLEEYDAQEGHCR. The TB 3 domain occupies 1411 to 1463; the sequence is MDCYSGQKGHAPCSSVLGRNTTQAECCCTQGASWGDACDLCPSEDSAEFSEIC. N1430 carries N-linked (GlcNAc...) asparagine glycosylation. The 43-residue stretch at 1485-1527 folds into the EGF-like 17; calcium-binding domain; it reads DADECVIFGPGLCPNGRCLNTVPGYVCLCNPGFHYDASHKKCE. The 40-residue stretch at 1528-1567 folds into the EGF-like 18; calcium-binding domain; the sequence is DHDECQDLACENGECVNTEGSFHCFCSPPLTLDLSQQRCM. N-linked (GlcNAc...) asparagine glycosylation is present at N1568. One can recognise a TB 4 domain in the interval 1584-1636; it reads DICWKKVTNDVCSEPLRGHRTTYTECCCQDGEAWSQQCALCPPRSSEVYAQLC. 10 cysteine pairs are disulfide-bonded: C1586–C1609, C1595–C1621, C1610–C1624, C1611–C1636, C1737–C1748, C1743–C1757, C1759–C1772, C1778–C1793, C1788–C1802, and C1804–C1817. Residues 1639–1821 are C-terminal domain; it reads ARIEAEREAG…AGPPHCTAKE (183 aa). Residues 1733-1773 enclose the EGF-like 19; calcium-binding domain; sequence QAEECGILNGCENGRCVRVREGYTCDCFEGFQLDAAHMACV. One can recognise an EGF-like 20; calcium-binding domain in the interval 1774 to 1818; the sequence is DVNECDDLNGPAVLCVHGYCENTEGSYRCHCSPGYVAEAGPPHCT.

Belongs to the LTBP family. As to quaternary structure, forms part of the large latent transforming growth factor beta precursor complex; removal is essential for activation of complex. Interacts with SDC4. Interacts (via C-terminal domain) with FBN1 (via N-terminal domain) in a Ca(+2)-dependent manner. In terms of processing, N-Glycosylated. Contains hydroxylated asparagine residues. Expressed in the aorta (at protein level). Expressed in lung, weakly expressed in heart, placenta, liver and skeletal muscle.

It is found in the secreted. The protein resides in the extracellular space. Its subcellular location is the extracellular matrix. Its function is as follows. May play an integral structural role in elastic-fiber architectural organization and/or assembly. The chain is Latent-transforming growth factor beta-binding protein 2 (LTBP2) from Homo sapiens (Human).